The following is a 313-amino-acid chain: 2-oxoglutarate-dependent dioxygenase eupC (313 aa).

In terms of domain architecture, Fe2OG dioxygenase spans 187–284 (PSIPMRFLHY…LNAKALDGSG (98 aa)). Residues histidine 212, aspartate 214, and histidine 263 each contribute to the Fe cation site. Residue lysine 274 coordinates 2-oxoglutarate.

The protein belongs to the iron/ascorbate-dependent oxidoreductase family. It depends on Fe(2+) as a cofactor.

It functions in the pathway secondary metabolite biosynthesis; terpenoid biosynthesis. Functionally, 2-oxoglutarate-dependent dioxygenase; part of the gene cluster that mediates the biosynthesis of eupenifeldin, a bistropolone meroterpenoid that acts as an antitumor agent. The first step of eupenifeldin biosynthesis is the biosynthesis of 3-methylorcinaldehyde performed by the non-reducing polyketide synthase eupA. Oxidative dearomatization of 3-methylorcinaldehyde likely catalyzed by the FAD-dependent monooxygenase eupB is followed by oxidative ring expansion by the 2-oxoglutarate-dependent dioxygenase eupC to provide the first tropolone metabolite, tropolone stipitaldehyde. In parallel, generation of sesquiterpene alpha-humulene from farnesylpyrophosphate (FPP) is catalyzed by the terpene cyclase eupE. The cytochrome P450 monooxygenase eupD then hydroxylates humulene to humulenol. The putative Diels-Alderase eupF probably catalyzes the formation of the tropolone-humulene skeleton by linking humulenol and the polyketide moiety. The short-chain dehydrogenase/reductase eupG and the flavin-dependent monooxygenase eupH are also essential for eupenifeldin biosynthesis and are likely the additional decorating enzymes of the tropolone-humulene skeleton to produce final eupenifeldin or derivatives. The sequence is that of 2-oxoglutarate-dependent dioxygenase eupC from Phoma sp.